The following is a 613-amino-acid chain: MSHFPKLLSSQIAFDVARTMLDGFDKHYRLFREVSHQAKLKFEAGDWHGLQQIQRDRIAFYNERVRESSVILEDEYDAENIEDEIWQQIKLHYIGLLTNHHQPELAETFFNSVCTRILHRSYFNNDFIFVRPAISTEYIENEESPTRPTFRAYYPGSREGMAACFERVVHNFQLESPFEDLQRDIGYVVRAVSEHFGDLRIAPNFQVHTLSSLFFRNKSAFIIGRILNGDRTFPLAIPIVHGPSGKLTLDTVLLKKEQLLILFSFTHSYFMVDMEIPSAYVTFLRDIMPRKPRAEIYTSLGLQKQGKNLFYRDFLHHLQHSSDKFIVAPGIRGLVMLVFTLPSYPYVFKVIKDFFPAPKETTRELVKSKYQLVKQHDRVGRMADTLEYSDVAFPLSRFDEALVREFEQHAPSMIEYQRGKDGGEEIVVRHVYIERRMTPLNIYLTEGTDEQVEHGVIEYGNAVKELIAANIFPGDMLYKNFGVTRHGRVVFYDYDEIEYLTDCNIRDVPQPRNEEEEMSGEVWYTVRPHDIFPETFRTFLLGDTRVRAAFLRHHADFFDPAMWQSHKDRLLAGHVHDFFAYHSSERFIHRYSEAGSAQGTAAVPDPGPARRVA.

ATP-binding positions include 328 to 334 and Lys349; that span reads APGIRGL. Asp384 is an active-site residue.

It belongs to the AceK family.

The protein resides in the cytoplasm. The catalysed reaction is L-seryl-[isocitrate dehydrogenase] + ATP = O-phospho-L-seryl-[isocitrate dehydrogenase] + ADP + H(+). Functionally, bifunctional enzyme which can phosphorylate or dephosphorylate isocitrate dehydrogenase (IDH) on a specific serine residue. This is a regulatory mechanism which enables bacteria to bypass the Krebs cycle via the glyoxylate shunt in response to the source of carbon. When bacteria are grown on glucose, IDH is fully active and unphosphorylated, but when grown on acetate or ethanol, the activity of IDH declines drastically concomitant with its phosphorylation. This chain is Isocitrate dehydrogenase kinase/phosphatase, found in Cupriavidus necator (strain ATCC 17699 / DSM 428 / KCTC 22496 / NCIMB 10442 / H16 / Stanier 337) (Ralstonia eutropha).